Consider the following 81-residue polypeptide: MSHTVKIYDTCIGCTQCVRACPTDVLEMVPWDGCKAQQIASSPRTEDCVGCKRCETACPTDFLSIRVYLGAETTRSMGLAY.

4Fe-4S ferredoxin-type domains are found at residues 2 to 31 (SHTV…MVPW) and 39 to 68 (IASS…IRVY). [4Fe-4S] cluster contacts are provided by Cys-11, Cys-14, Cys-17, Cys-21, Cys-48, Cys-51, Cys-54, and Cys-58.

The cyanobacterial PSI reaction center is composed of one copy each of PsaA,B,C,D,E,F,I,J,K,L,M and X, and forms trimeric complexes. [4Fe-4S] cluster is required as a cofactor.

Its subcellular location is the cellular thylakoid membrane. It catalyses the reaction reduced [plastocyanin] + hnu + oxidized [2Fe-2S]-[ferredoxin] = oxidized [plastocyanin] + reduced [2Fe-2S]-[ferredoxin]. In terms of biological role, apoprotein for the two 4Fe-4S centers FA and FB of photosystem I (PSI); essential for photochemical activity. FB is the terminal electron acceptor of PSI, donating electrons to ferredoxin. The C-terminus interacts with PsaA/B/D and helps assemble the protein into the PSI complex. Required for binding of PsaD and PsaE to PSI. PSI is a plastocyanin/cytochrome c6-ferredoxin oxidoreductase, converting photonic excitation into a charge separation, which transfers an electron from the donor P700 chlorophyll pair to the spectroscopically characterized acceptors A0, A1, FX, FA and FB in turn. This is Photosystem I iron-sulfur center from Mastigocladus laminosus (Fischerella sp.).